A 481-amino-acid chain; its full sequence is Aspartyl/glutamyl-tRNA(Asn/Gln) amidotransferase subunit B (481 aa).

The interval 29 to 50 is disordered; it reads SSSKSSHTDPKNTNISPIDLGH.

It belongs to the GatB/GatE family. GatB subfamily. Heterotrimer of A, B and C subunits.

The enzyme catalyses L-glutamyl-tRNA(Gln) + L-glutamine + ATP + H2O = L-glutaminyl-tRNA(Gln) + L-glutamate + ADP + phosphate + H(+). It carries out the reaction L-aspartyl-tRNA(Asn) + L-glutamine + ATP + H2O = L-asparaginyl-tRNA(Asn) + L-glutamate + ADP + phosphate + 2 H(+). In terms of biological role, allows the formation of correctly charged Asn-tRNA(Asn) or Gln-tRNA(Gln) through the transamidation of misacylated Asp-tRNA(Asn) or Glu-tRNA(Gln) in organisms which lack either or both of asparaginyl-tRNA or glutaminyl-tRNA synthetases. The reaction takes place in the presence of glutamine and ATP through an activated phospho-Asp-tRNA(Asn) or phospho-Glu-tRNA(Gln). The protein is Aspartyl/glutamyl-tRNA(Asn/Gln) amidotransferase subunit B of Malacoplasma penetrans (strain HF-2) (Mycoplasma penetrans).